Here is a 146-residue protein sequence, read N- to C-terminus: Acidic phospholipase A2 CM-II (146 aa).

The N-terminal stretch at 1–21 (MNPAHLLILAAVCVSPLGAFS) is a signal peptide. A propeptide spanning residues 22-27 (NRPMPL) is cleaved from the precursor. 7 cysteine pairs are disulfide-bonded: Cys-38–Cys-98, Cys-53–Cys-145, Cys-55–Cys-71, Cys-70–Cys-126, Cys-77–Cys-119, Cys-87–Cys-112, and Cys-105–Cys-117. Ca(2+)-binding residues include Tyr-54, Gly-56, and Gly-58. Residue His-74 is part of the active site. Ca(2+) is bound at residue Asp-75. Residue Asp-120 is part of the active site.

It belongs to the phospholipase A2 family. Group I subfamily. D49 sub-subfamily. The cofactor is Ca(2+). Expressed by the venom gland.

It localises to the secreted. It catalyses the reaction a 1,2-diacyl-sn-glycero-3-phosphocholine + H2O = a 1-acyl-sn-glycero-3-phosphocholine + a fatty acid + H(+). Functionally, PLA2 catalyzes the calcium-dependent hydrolysis of the 2-acyl groups in 3-sn-phosphoglycerides. Is able to suppress the acetylcholine (ACh)-evoked current mediated by alpha-7 (CHRNA7)-similar nAChRs in L.stagnalis neurons (IC(50)=37 nM) and to compete with alpha-bungarotoxin for binding to muscle- and alpha-7 neuronal nAChR types, as well as to AChBPs. In inhibition of alpha-bungarotoxin binding, this toxin is similarly active against T.californica nAChR (IC(50)=1.2 uM), human alpha-7 nAChR (IC(50)=3.2 uM), and L.stagnalis AChBP (IC(50)=1.0 uM), whereas it is not active against A.californica AChBP (IC(50)&gt;100 uM). This is Acidic phospholipase A2 CM-II from Naja kaouthia (Monocled cobra).